A 308-amino-acid polypeptide reads, in one-letter code: Protoheme IX farnesyltransferase (308 aa).

A run of 8 helical transmembrane segments spans residues 31–51, 53–73, 102–122, 124–144, 149–169, 170–190, 242–262, and 288–308; these read VIEL…RGTV, PLLI…ANTL, HALI…WLST, LLSG…YTML, TSQN…IGWS, AVTG…FFWT, LATG…FLVM, and YLAV…PTLL.

Belongs to the UbiA prenyltransferase family. Protoheme IX farnesyltransferase subfamily.

It localises to the cell membrane. The enzyme catalyses heme b + (2E,6E)-farnesyl diphosphate + H2O = Fe(II)-heme o + diphosphate. The protein operates within porphyrin-containing compound metabolism; heme O biosynthesis; heme O from protoheme: step 1/1. Its function is as follows. Converts heme B (protoheme IX) to heme O by substitution of the vinyl group on carbon 2 of heme B porphyrin ring with a hydroxyethyl farnesyl side group. In Mycolicibacterium smegmatis (strain ATCC 700084 / mc(2)155) (Mycobacterium smegmatis), this protein is Protoheme IX farnesyltransferase.